Consider the following 54-residue polypeptide: Rubredoxin (54 aa).

At Met1 the chain carries N-formylmethionine. Residues Met1–Glu54 form the Rubredoxin-like domain. The Fe cation site is built by Cys6, Cys9, Cys39, and Cys42.

Belongs to the rubredoxin family. Fe(3+) serves as cofactor.

In terms of biological role, rubredoxin is a small nonheme, iron protein lacking acid-labile sulfide. Its single Fe, chelated to 4 Cys, functions as an electron acceptor and may also stabilize the conformation of the molecule. This is Rubredoxin from Clostridium pasteurianum.